The primary structure comprises 352 residues: Peptide chain release factor 1 (352 aa).

Q233 bears the N5-methylglutamine mark. A disordered region spans residues 288–309 (NAKDRKEQVGSGDRSERIRTYN). Basic and acidic residues predominate over residues 289–306 (AKDRKEQVGSGDRSERIR).

It belongs to the prokaryotic/mitochondrial release factor family. Post-translationally, methylated by PrmC. Methylation increases the termination efficiency of RF1.

It is found in the cytoplasm. Peptide chain release factor 1 directs the termination of translation in response to the peptide chain termination codons UAG and UAA. The polypeptide is Peptide chain release factor 1 (Helicobacter acinonychis (strain Sheeba)).